Reading from the N-terminus, the 288-residue chain is MIIKFIQIIKPGIIFGNIISTIGGFLLASQGDINVNLFIFTISATAILIASASIFNNCIDKDIDIKMQRTKNRAIAIGLISSNIAYIYALILLILSFLLFLKTNFLTIFISMLGFFIYVFIYSLLMKRKSVYSTIIGSLSGATPPIIGYCSVKEHFDIGAFILLCIFSFWQIPHSYAIGLVRYNDYKIASIPIFPIKKGSFKTKINIIIYIIAFFISTIMLFFAGYTGNNYLFFSIFFGLIWIFIAIKGFKSSEENFNIIWGRKIFLFSIVIITAISILISIDYKKNI.

The next 9 membrane-spanning stretches (helical) occupy residues 8–28 (IIKP…FLLA), 35–55 (VNLF…ASIF), 75–95 (IAIG…LLIL), 105–125 (FLTI…YSLL), 130–150 (SVYS…IGYC), 161–181 (FILL…IGLV), 205–225 (INII…FFAG), 230–250 (NYLF…IKGF), and 265–285 (IFLF…IDYK).

It belongs to the UbiA prenyltransferase family. Protoheme IX farnesyltransferase subfamily.

It is found in the cell membrane. The catalysed reaction is heme b + (2E,6E)-farnesyl diphosphate + H2O = Fe(II)-heme o + diphosphate. The protein operates within porphyrin-containing compound metabolism; heme O biosynthesis; heme O from protoheme: step 1/1. In terms of biological role, converts heme B (protoheme IX) to heme O by substitution of the vinyl group on carbon 2 of heme B porphyrin ring with a hydroxyethyl farnesyl side group. This is Protoheme IX farnesyltransferase from Wigglesworthia glossinidia brevipalpis.